The primary structure comprises 72 residues: Translation initiation factor IF-1 (72 aa).

The S1-like domain occupies 1-72 (MSKEDVIEVE…TRGRITWRKK (72 aa)).

The protein belongs to the IF-1 family. As to quaternary structure, component of the 30S ribosomal translation pre-initiation complex which assembles on the 30S ribosome in the order IF-2 and IF-3, IF-1 and N-formylmethionyl-tRNA(fMet); mRNA recruitment can occur at any time during PIC assembly.

The protein resides in the cytoplasm. Its function is as follows. One of the essential components for the initiation of protein synthesis. Stabilizes the binding of IF-2 and IF-3 on the 30S subunit to which N-formylmethionyl-tRNA(fMet) subsequently binds. Helps modulate mRNA selection, yielding the 30S pre-initiation complex (PIC). Upon addition of the 50S ribosomal subunit IF-1, IF-2 and IF-3 are released leaving the mature 70S translation initiation complex. The polypeptide is Translation initiation factor IF-1 (Alkaliphilus metalliredigens (strain QYMF)).